The following is a 492-amino-acid chain: Steroid 21-hydroxylase (492 aa).

2 residues coordinate heme b: arginine 92 and lysine 121. 17alpha-hydroxyprogesterone is bound at residue arginine 232. Arginine 232 contacts progesterone. Heme b-binding residues include histidine 364, arginine 425, and cysteine 427.

The protein belongs to the cytochrome P450 family. Heme b serves as cofactor.

Its subcellular location is the endoplasmic reticulum membrane. The protein resides in the microsome membrane. It carries out the reaction progesterone + reduced [NADPH--hemoprotein reductase] + O2 = 21-hydroxyprogesterone + oxidized [NADPH--hemoprotein reductase] + H2O + H(+). It catalyses the reaction 17alpha-hydroxyprogesterone + reduced [NADPH--hemoprotein reductase] + O2 = 11-deoxycortisol + oxidized [NADPH--hemoprotein reductase] + H2O + H(+). A cytochrome P450 monooxygenase that plays a major role in adrenal steroidogenesis. Catalyzes the hydroxylation at C-21 of progesterone and 17alpha-hydroxyprogesterone to respectively form 11-deoxycorticosterone and 11-deoxycortisol, intermediate metabolites in the biosynthetic pathway of mineralocorticoids and glucocorticoids. Mechanistically, uses molecular oxygen inserting one oxygen atom into a substrate, and reducing the second into a water molecule, with two electrons provided by NADPH via cytochrome P450 reductase (CPR; NADPH-ferrihemoprotein reductase). This Sus scrofa (Pig) protein is Steroid 21-hydroxylase (CYP21).